We begin with the raw amino-acid sequence, 97 residues long: Protein RnfH (97 aa).

It belongs to the UPF0125 (RnfH) family.

This is Protein RnfH from Paramagnetospirillum magneticum (strain ATCC 700264 / AMB-1) (Magnetospirillum magneticum).